Here is a 382-residue protein sequence, read N- to C-terminus: Na(+)/H(+) antiporter NhaA 2 (382 aa).

11 helical membrane-spanning segments follow: residues 8 to 28 (FFSSPAAGGIVLIIASAAAII), 49 to 69 (LSVEHWINDALMAVFFMMVGL), 87 to 107 (ALPGFAALGGMAVPAAIYVWF), 115 to 135 (LAGWAIPAATDIAFALGVLAL), 146 to 166 (IFLSALAILDDMGAVAIIALF), 169 to 189 (SNISFLMLAGAAVTVALLFIM), 209 to 229 (FFMLQSGVHATIAGILLALFI), 252 to 272 (WVTFLILPLFGFANAGVALSG), 286 to 306 (VALGLFVGKQAGIFGLSLLAV), 325 to 345 (VSVLCGIGFTMSLFIGNLAFA), and 353 to 373 (EVKVGVLAGSVLAALAGMLIL).

Belongs to the NhaA Na(+)/H(+) (TC 2.A.33) antiporter family.

It localises to the cell inner membrane. The enzyme catalyses Na(+)(in) + 2 H(+)(out) = Na(+)(out) + 2 H(+)(in). In terms of biological role, na(+)/H(+) antiporter that extrudes sodium in exchange for external protons. This is Na(+)/H(+) antiporter NhaA 2 from Klebsiella pneumoniae subsp. pneumoniae (strain ATCC 700721 / MGH 78578).